The primary structure comprises 574 residues: Uric acid-xanthine permease (574 aa).

The interval 1 to 20 (MDNSIHSTDGPDSVIPNSNP) is disordered. Helical transmembrane passes span 77 to 97 (LLAF…VVTP), 111 to 131 (LQQY…MVQI), 141 to 161 (YYIG…ISVA), 188 to 209 (AYGA…LAFV), 217 to 237 (IFPP…LIGT), 264 to 284 (LPWG…SIIL), 296 to 315 (CSVV…CGYF), 338 to 361 (VYGP…IGDV), 427 to 447 (CCLI…IVAI), 451 to 471 (VMGG…QAIV), 482 to 502 (FILT…TWFG), and 522 to 542 (LVLE…NAIM). The interval 555–574 (MPVSAHDNRDGEAEYQSKQA) is disordered. A Glycyl lysine isopeptide (Lys-Gly) (interchain with G-Cter in ubiquitin) cross-link involves residue Lys572.

It belongs to the nucleobase:cation symporter-2 (NCS2) (TC 2.A.40) family. Ubiquitinated by hulA. Ubiquitination leads to internalization, sorting into the endosomal pathway to the vacuolar lumen where uapA is eventually degraded.

It is found in the cell membrane. In terms of biological role, uric acid-xanthine transporter. The sequence is that of Uric acid-xanthine permease (uapA) from Emericella nidulans (strain FGSC A4 / ATCC 38163 / CBS 112.46 / NRRL 194 / M139) (Aspergillus nidulans).